A 325-amino-acid chain; its full sequence is Dehydrogenase/reductase SDR family member 7B (325 aa).

Residues 1 to 17 (MVSAATRKSLLRARVMD) lie on the Cytoplasmic side of the membrane. The chain crosses the membrane as a helical; Signal-anchor for type II membrane protein span at residues 18–38 (FITSTAILPLLLGCVGLFSLF). Topologically, residues 39-325 (KLLQWLRMRA…ARKERKSKHS (287 aa)) are lumenal. Residues Ser62 and Leu64 each coordinate NAD(+). Substrate is bound at residue Ser194. Positions 207, 211, and 242 each coordinate NAD(+). Tyr207 serves as the catalytic Proton acceptor.

The protein belongs to the short-chain dehydrogenases/reductases (SDR) family.

It localises to the endoplasmic reticulum membrane. Functionally, putative oxidoreductase. This is Dehydrogenase/reductase SDR family member 7B (DHRS7B) from Bos taurus (Bovine).